The following is a 193-amino-acid chain: Large ribosomal subunit protein eL18 (193 aa).

The segment at 158–193 is disordered; the sequence is HFGAAGVPGSHAKPFTSNRGKERQRSSARRRAFRHK. Positions 183–193 are enriched in basic residues; that stretch reads SSARRRAFRHK.

It belongs to the eukaryotic ribosomal protein eL18 family.

The protein resides in the cytoplasm. This is Large ribosomal subunit protein eL18 (RPL18) from Trypanosoma cruzi (strain CL Brener).